The following is a 315-amino-acid chain: 4-hydroxy-3-methylbut-2-enyl diphosphate reductase (315 aa).

C12 contributes to the [4Fe-4S] cluster binding site. (2E)-4-hydroxy-3-methylbut-2-enyl diphosphate contacts are provided by H41 and H74. Positions 41 and 74 each coordinate dimethylallyl diphosphate. Positions 41 and 74 each coordinate isopentenyl diphosphate. Residue C96 coordinates [4Fe-4S] cluster. H124 serves as a coordination point for (2E)-4-hydroxy-3-methylbut-2-enyl diphosphate. H124 serves as a coordination point for dimethylallyl diphosphate. H124 contributes to the isopentenyl diphosphate binding site. E126 serves as the catalytic Proton donor. Residue T168 coordinates (2E)-4-hydroxy-3-methylbut-2-enyl diphosphate. C198 is a [4Fe-4S] cluster binding site. 4 residues coordinate (2E)-4-hydroxy-3-methylbut-2-enyl diphosphate: S226, S227, N228, and S270. Dimethylallyl diphosphate-binding residues include S226, S227, N228, and S270. The isopentenyl diphosphate site is built by S226, S227, N228, and S270.

The protein belongs to the IspH family. [4Fe-4S] cluster is required as a cofactor.

It carries out the reaction isopentenyl diphosphate + 2 oxidized [2Fe-2S]-[ferredoxin] + H2O = (2E)-4-hydroxy-3-methylbut-2-enyl diphosphate + 2 reduced [2Fe-2S]-[ferredoxin] + 2 H(+). The catalysed reaction is dimethylallyl diphosphate + 2 oxidized [2Fe-2S]-[ferredoxin] + H2O = (2E)-4-hydroxy-3-methylbut-2-enyl diphosphate + 2 reduced [2Fe-2S]-[ferredoxin] + 2 H(+). The protein operates within isoprenoid biosynthesis; dimethylallyl diphosphate biosynthesis; dimethylallyl diphosphate from (2E)-4-hydroxy-3-methylbutenyl diphosphate: step 1/1. It participates in isoprenoid biosynthesis; isopentenyl diphosphate biosynthesis via DXP pathway; isopentenyl diphosphate from 1-deoxy-D-xylulose 5-phosphate: step 6/6. Functionally, catalyzes the conversion of 1-hydroxy-2-methyl-2-(E)-butenyl 4-diphosphate (HMBPP) into a mixture of isopentenyl diphosphate (IPP) and dimethylallyl diphosphate (DMAPP). Acts in the terminal step of the DOXP/MEP pathway for isoprenoid precursor biosynthesis. This Pseudomonas entomophila (strain L48) protein is 4-hydroxy-3-methylbut-2-enyl diphosphate reductase.